The sequence spans 304 residues: Putative dihydroorotate dehydrogenase A (fumarate) (304 aa).

FMN contacts are provided by residues Ser21 and 45-46; that span reads KS. Substrate is bound by residues Lys45, 69–73, and Asn129; that span reads NAVGL. Asn129 lines the FMN pocket. Cys132 functions as the Nucleophile in the catalytic mechanism. FMN is bound by residues Lys168 and Ile194. A substrate-binding site is contributed by 195–196; sequence NT. FMN-binding positions include Gly220, 246-247, and 268-269; these read GG and GS.

Belongs to the dihydroorotate dehydrogenase family. Type 1 subfamily. As to quaternary structure, homodimer. The cofactor is FMN.

The protein resides in the cytoplasm. It carries out the reaction (S)-dihydroorotate + fumarate = orotate + succinate. The protein operates within pyrimidine metabolism; UMP biosynthesis via de novo pathway. In terms of biological role, catalyzes the conversion of dihydroorotate to orotate with fumarate as the electron acceptor. The protein is Putative dihydroorotate dehydrogenase A (fumarate) (pyrD) of Pediococcus pentosaceus (strain ATCC 25745 / CCUG 21536 / LMG 10740 / 183-1w).